A 142-amino-acid polypeptide reads, in one-letter code: Small ribosomal subunit protein bS6 (142 aa).

Residues 110–142 (NKKPSHAKEKHEKTEHAHSHHTEEAGSKESHSE) form a disordered region.

Belongs to the bacterial ribosomal protein bS6 family.

Functionally, binds together with bS18 to 16S ribosomal RNA. The chain is Small ribosomal subunit protein bS6 from Helicobacter acinonychis (strain Sheeba).